Here is a 356-residue protein sequence, read N- to C-terminus: Protein pelota homolog (356 aa).

It belongs to the eukaryotic release factor 1 family. Pelota subfamily. Monomer. Requires a divalent metal cation as cofactor.

It is found in the cytoplasm. In terms of biological role, may function in recognizing stalled ribosomes, interact with stem-loop structures in stalled mRNA molecules, and effect endonucleolytic cleavage of the mRNA. May play a role in the release non-functional ribosomes and degradation of damaged mRNAs. Has endoribonuclease activity. In Staphylothermus marinus (strain ATCC 43588 / DSM 3639 / JCM 9404 / F1), this protein is Protein pelota homolog.